The chain runs to 306 residues: Glutaminase (306 aa).

S64, N115, E159, N166, Y190, Y242, and V260 together coordinate substrate.

The protein belongs to the glutaminase family. Homotetramer.

It carries out the reaction L-glutamine + H2O = L-glutamate + NH4(+). The protein is Glutaminase of Aeromonas salmonicida (strain A449).